A 275-amino-acid polypeptide reads, in one-letter code: Two-component response regulator PprB (275 aa).

Residues 10–128 (SVLIIDDEPQ…ELLHGLERLE (119 aa)) enclose the Response regulatory domain. 4-aspartylphosphate is present on Asp-60. Residues 173–205 (SQPSALRSEDSQPSAPPAPVAESQVSPSNPLFG) are disordered. The HTH luxR-type domain occupies 200–265 (SNPLFGKLSP…QLALALSPAA (66 aa)). A DNA-binding region (H-T-H motif) is located at residues 224 to 243 (NYQIAYELGITENTVKLYVS).

In terms of processing, phosphorylated by PprA.

In terms of biological role, member of the two-component regulatory system PprA/PprB involved in biofilm formation by controlling the expression of many related genes including type IVb pili major subunit flp pilin, adhesin bapA or cupE fimbriae. Functions as a transcription regulator by direct binding to promoter regions. Negatively regulates its own transcription. This chain is Two-component response regulator PprB, found in Pseudomonas aeruginosa (strain ATCC 15692 / DSM 22644 / CIP 104116 / JCM 14847 / LMG 12228 / 1C / PRS 101 / PAO1).